A 211-amino-acid polypeptide reads, in one-letter code: Ion-translocating oxidoreductase complex subunit G (211 aa).

The helical transmembrane segment at 9-29 (GLTLAIFACATTGLVALTQYL) threads the bilayer. At Thr175 the chain carries FMN phosphoryl threonine.

This sequence belongs to the RnfG family. In terms of assembly, the complex is composed of six subunits: RnfA, RnfB, RnfC, RnfD, RnfE and RnfG. FMN serves as cofactor.

It is found in the cell inner membrane. Part of a membrane-bound complex that couples electron transfer with translocation of ions across the membrane. This chain is Ion-translocating oxidoreductase complex subunit G, found in Vibrio parahaemolyticus serotype O3:K6 (strain RIMD 2210633).